Here is a 1119-residue protein sequence, read N- to C-terminus: Nuclear matrix constituent protein 1 (1119 aa).

2 coiled-coil regions span residues 140–226 and 328–488; these read LAEL…LYQQ and LQNR…LDER. 4 disordered regions span residues 846-884, 903-974, 989-1015, and 1046-1109; these read LDVEDSQQSDVRAGNRKPGKRAKGRVRRKRSAKEVAEEA, LASA…PTGR, NGALSDPNKGKEKEIDDGGGIGEEIPD, and GINA…EVSM. Composition is skewed to basic residues over residues 859 to 876 and 920 to 929; these read GNRKPGKRAKGRVRRKRS and KRTRNSRKRN. Residues 1075–1085 show a composition bias toward polar residues; sequence TPEQSRGYQNQ.

The protein belongs to the CRWN family.

The protein resides in the nucleus matrix. It localises to the nucleus lamina. Its function is as follows. Architectural component of nuclear structure that plays different roles in controlling nuclear size and morphology. The chain is Nuclear matrix constituent protein 1 from Daucus carota subsp. sativus (Carrot).